The chain runs to 102 residues: NADH-quinone oxidoreductase subunit K (102 aa).

A run of 3 helical transmembrane segments spans residues 5 to 25, 31 to 51, and 66 to 86; these read IAHY…GIFL, IVIL…FVAF, and FVLT…VVFF.

The protein belongs to the complex I subunit 4L family. NDH-1 is composed of 14 different subunits. Subunits NuoA, H, J, K, L, M, N constitute the membrane sector of the complex.

It localises to the cell inner membrane. It carries out the reaction a quinone + NADH + 5 H(+)(in) = a quinol + NAD(+) + 4 H(+)(out). In terms of biological role, NDH-1 shuttles electrons from NADH, via FMN and iron-sulfur (Fe-S) centers, to quinones in the respiratory chain. The immediate electron acceptor for the enzyme in this species is believed to be ubiquinone. Couples the redox reaction to proton translocation (for every two electrons transferred, four hydrogen ions are translocated across the cytoplasmic membrane), and thus conserves the redox energy in a proton gradient. In Brucella abortus (strain S19), this protein is NADH-quinone oxidoreductase subunit K.